Consider the following 532-residue polypeptide: Protein FAM227B (532 aa).

Residues 432–482 adopt a coiled-coil conformation; sequence DNKKDFKRVKQRIKDDIKFLREQQELIDKELDRIQAKASKNLQEVKNEFEN. The interval 494-532 is disordered; it reads KEEYGGSTSASESPQSMQSPQSSSSFPTISEDFNNVEEG. Residues 500 to 523 show a composition bias toward low complexity; the sequence is STSASESPQSMQSPQSSSSFPTIS.

The protein belongs to the FAM227 family.

This Mus musculus (Mouse) protein is Protein FAM227B (Fam227b).